We begin with the raw amino-acid sequence, 715 residues long: ATP-dependent DNA helicase Hel308 (715 aa).

The Q motif signature appears at 1–29 (MKVGELNVSEKIKEILRERGIEELYPPQA). ATP-binding positions include Gln28 and 46–53 (IPTASGKT). Residues 33–197 (TSGVLEGENL…WLNAKLIRSD (165 aa)) enclose the Helicase ATP-binding domain. The short motif at 145 to 148 (DEIH) is the DEAH box element. Positions 226 to 422 (WEELVYDAVK…ILRSQILALI (197 aa)) constitute a Helicase C-terminal domain.

Belongs to the helicase family. Hel308 subfamily. In terms of assembly, monomer.

The enzyme catalyses Couples ATP hydrolysis with the unwinding of duplex DNA by translocating in the 3'-5' direction.. It catalyses the reaction ATP + H2O = ADP + phosphate + H(+). In terms of biological role, DNA-dependent ATPase and 3'-5' DNA helicase that may be involved in repair of stalled replication forks. Its function is as follows. Rapidly unwinds double-stranded (ds)DNA with a 3'-overhang, has no strand reannealing capabilities. Binds single-stranded (ss)DNA, dsDNA with a 3'-overhang and ssRNA. This is ATP-dependent DNA helicase Hel308 from Pyrococcus abyssi (strain GE5 / Orsay).